Reading from the N-terminus, the 671-residue chain is Acetyl-coenzyme A synthetase 1 (671 aa).

Residues 210–213 (RGGK) and threonine 329 each bind CoA. Residues 405 to 407 (GEP), 429 to 434 (DTYWQT), aspartate 520, and arginine 535 each bind ATP. Position 543 (serine 543) interacts with CoA. Arginine 546 lines the ATP pocket. Residue arginine 605 coordinates CoA.

The protein belongs to the ATP-dependent AMP-binding enzyme family.

It catalyses the reaction acetate + ATP + CoA = acetyl-CoA + AMP + diphosphate. This chain is Acetyl-coenzyme A synthetase 1 (ACS1), found in Debaryomyces hansenii (strain ATCC 36239 / CBS 767 / BCRC 21394 / JCM 1990 / NBRC 0083 / IGC 2968) (Yeast).